A 385-amino-acid polypeptide reads, in one-letter code: tRNA-specific 2-thiouridylase MnmA (385 aa).

ATP is bound by residues 30 to 37 (GMSGGVDS) and Met56. Residues 118–120 (NPD) are interaction with target base in tRNA. The active-site Nucleophile is Cys123. Cys123 and Cys220 form a disulfide bridge. Gly148 is a binding site for ATP. The segment at 170–172 (KDQ) is interaction with tRNA. Cys220 functions as the Cysteine persulfide intermediate in the catalytic mechanism. The interaction with tRNA stretch occupies residues 332–333 (RY).

The protein belongs to the MnmA/TRMU family.

Its subcellular location is the cytoplasm. It catalyses the reaction S-sulfanyl-L-cysteinyl-[protein] + uridine(34) in tRNA + AH2 + ATP = 2-thiouridine(34) in tRNA + L-cysteinyl-[protein] + A + AMP + diphosphate + H(+). Catalyzes the 2-thiolation of uridine at the wobble position (U34) of tRNA, leading to the formation of s(2)U34. The chain is tRNA-specific 2-thiouridylase MnmA from Haemophilus influenzae (strain PittGG).